The chain runs to 229 residues: Potassium/proton antiporter CemA (229 aa).

The next 3 membrane-spanning stretches (helical) occupy residues 7-27 (FTPL…SFSV), 107-127 (ILHF…SILG), and 189-209 (IISG…KYWI).

It belongs to the CemA family.

The protein localises to the plastid. Its subcellular location is the chloroplast inner membrane. It carries out the reaction K(+)(in) + H(+)(out) = K(+)(out) + H(+)(in). Functionally, contributes to K(+)/H(+) antiport activity by supporting proton efflux to control proton extrusion and homeostasis in chloroplasts in a light-dependent manner to modulate photosynthesis. Prevents excessive induction of non-photochemical quenching (NPQ) under continuous-light conditions. Indirectly promotes efficient inorganic carbon uptake into chloroplasts. This Nicotiana tomentosiformis (Tobacco) protein is Potassium/proton antiporter CemA.